The following is a 58-amino-acid chain: Potassium channel toxin alpha-KTx 9.9 (58 aa).

An N-terminal signal peptide occupies residues 1-21; that stretch reads KKTSRLFTLVLIVLAMNVMMA. A propeptide spanning residues 22–30 is cleaved from the precursor; that stretch reads IISDPVVEA. 3 cysteine pairs are disulfide-bonded: cysteine 33–cysteine 49, cysteine 36–cysteine 54, and cysteine 40–cysteine 56.

Belongs to the short scorpion toxin superfamily. Potassium channel inhibitor family. Alpha-KTx 09 subfamily. Expressed by the venom gland.

The protein resides in the secreted. Its function is as follows. Potassium channel inhibitor. This is Potassium channel toxin alpha-KTx 9.9 from Buthus israelis (Israeli scorpion).